Reading from the N-terminus, the 360-residue chain is Putative mRNA-decapping protein (360 aa).

A CCHC-type zinc finger spans residues 11–28 (HICSNCGRSGHEFRNCIE). Positions 163 to 347 (YKYDNILYHF…KKRILTRVYL (185 aa)) constitute a Nudix hydrolase domain. Positions 242-264 (GRRDKRSEENMVCACREFEEETG) match the Nudix box motif. Mg(2+) is bound at residue Glu-249. The active-site Nucleophile is Glu-258. Position 262 (Glu-262) interacts with Mg(2+).

It belongs to the Nudix hydrolase family. DIPP subfamily. Requires Mg(2+) as cofactor. The cofactor is Mn(2+).

The catalysed reaction is diphospho-myo-inositol polyphosphate + H2O = myo-inositol polyphosphate + phosphate.. Might function as a decapping enzyme required for the removal of the 5'-end m7GpppN cap tethered to viral and host mRNAs to allow their decay in cells. In addition to the mRNA cap, probably also efficiently hydrolyzes diphosphoinositol polyphosphates. This chain is Putative mRNA-decapping protein, found in Acanthamoeba polyphaga (Amoeba).